The chain runs to 949 residues: AP-1 complex subunit beta-1 (949 aa).

Position 318 is an N6-acetyllysine (lysine 318). Residue tyrosine 574 is modified to 3'-nitrotyrosine. A disordered region spans residues 592 to 623 (SLPPRTASSESTESPEAAPAGAPASDQPDVIP). Low complexity predominate over residues 594–616 (PPRTASSESTESPEAAPAGAPAS).

Belongs to the adaptor complexes large subunit family. As to quaternary structure, adaptor protein complex 1 (AP-1) is a heterotetramer composed of two large adaptins (gamma-type subunit AP1G1 and beta-type subunit AP1B1), a medium adaptin (mu-type subunit AP1M1 or AP1M2) and a small adaptin (sigma-type subunit AP1S1 or AP1S2 or AP1S3). In terms of processing, the N-terminus is blocked.

Its subcellular location is the golgi apparatus. It is found in the cytoplasmic vesicle. It localises to the clathrin-coated vesicle membrane. In terms of biological role, subunit of clathrin-associated adaptor protein complex 1 that plays a role in protein sorting in the late-Golgi/trans-Golgi network (TGN) and/or endosomes. The AP complexes mediate both the recruitment of clathrin to membranes and the recognition of sorting signals within the cytosolic tails of transmembrane cargo molecules. This Rattus norvegicus (Rat) protein is AP-1 complex subunit beta-1 (Ap1b1).